Consider the following 389-residue polypeptide: MNNIVHKLKTLVLNEAFGGVLLIVCTLLALLVQNGSFSEHYREFLNLKVGFSVGEFELNKPFLLWINDGLISIFFFAIGLELKKEFLHGDFKNPKNIVLPFMAALGGILIPAMLFALVNIGDAYTLKGWAIPTATDTAFALAILMMCGKHIPSSLKIFLLSLAIFDDVGAILIIAIFYTTKLSIVAFVVAGIAILAMLVLNILGITRKSFYFICSVILWISVLKSGVHATLAGIITAFFIPMQTKNGEAFLEEIYESLKFWLAFVILPLFAFANAGVNLSNIDIGAIFSGVSVGIFLGLFVGKQVGVFLFSYLAIRFKFAALPQGSNLKQLYGVCILTGIGFTMSLFIDGLAYEVSDIFNYADNLAILIASFCSGIWGFIYLKFFAARS.

A run of 11 helical transmembrane segments spans residues 12-32 (VLNE…ALLV), 62-82 (FLLW…GLEL), 97-117 (IVLP…LFAL), 128-148 (GWAI…MMCG), 157-177 (IFLL…IAIF), 184-204 (IVAF…NILG), 220-240 (ISVL…AFFI), 260-280 (FWLA…VNLS), 282-302 (IDIG…LFVG), 331-351 (LYGV…IDGL), and 365-385 (LAIL…LKFF).

It belongs to the NhaA Na(+)/H(+) (TC 2.A.33) antiporter family.

It is found in the cell inner membrane. The catalysed reaction is Na(+)(in) + 2 H(+)(out) = Na(+)(out) + 2 H(+)(in). Its function is as follows. Na(+)/H(+) antiporter that extrudes sodium in exchange for external protons. The protein is Na(+)/H(+) antiporter NhaA 1 of Campylobacter jejuni subsp. jejuni serotype O:6 (strain 81116 / NCTC 11828).